We begin with the raw amino-acid sequence, 200 residues long: Holliday junction branch migration complex subunit RuvA (200 aa).

The segment at 1-64 is domain I; that stretch reads MYAYFRGELI…EDLMQLYGFI (64 aa). The domain II stretch occupies residues 65-143; the sequence is EEEERQLFLL…KLQQTRPGKT (79 aa). Residues 144 to 154 are flexible linker; the sequence is AGAGSVASLSE. A domain III region spans residues 154-200; sequence EDALQALMTLGFSRASAQQAVTRALLSAENPGVEDIVREALQNIRNH.

It belongs to the RuvA family. In terms of assembly, homotetramer. Forms an RuvA(8)-RuvB(12)-Holliday junction (HJ) complex. HJ DNA is sandwiched between 2 RuvA tetramers; dsDNA enters through RuvA and exits via RuvB. An RuvB hexamer assembles on each DNA strand where it exits the tetramer. Each RuvB hexamer is contacted by two RuvA subunits (via domain III) on 2 adjacent RuvB subunits; this complex drives branch migration. In the full resolvosome a probable DNA-RuvA(4)-RuvB(12)-RuvC(2) complex forms which resolves the HJ.

It is found in the cytoplasm. The RuvA-RuvB-RuvC complex processes Holliday junction (HJ) DNA during genetic recombination and DNA repair, while the RuvA-RuvB complex plays an important role in the rescue of blocked DNA replication forks via replication fork reversal (RFR). RuvA specifically binds to HJ cruciform DNA, conferring on it an open structure. The RuvB hexamer acts as an ATP-dependent pump, pulling dsDNA into and through the RuvAB complex. HJ branch migration allows RuvC to scan DNA until it finds its consensus sequence, where it cleaves and resolves the cruciform DNA. In Prosthecochloris aestuarii (strain DSM 271 / SK 413), this protein is Holliday junction branch migration complex subunit RuvA.